The primary structure comprises 66 residues: Large ribosomal subunit protein uL29 (66 aa).

It belongs to the universal ribosomal protein uL29 family.

This chain is Large ribosomal subunit protein uL29, found in Nitrosococcus oceani (strain ATCC 19707 / BCRC 17464 / JCM 30415 / NCIMB 11848 / C-107).